A 487-amino-acid chain; its full sequence is V-type proton ATPase subunit B2 (487 aa).

At G2 the chain carries N-acetylglycine.

Belongs to the ATPase alpha/beta chains family. In terms of assembly, V-ATPase is a heteromultimeric enzyme composed of a peripheral catalytic V1 complex (components A to H) attached to an integral membrane V0 proton pore complex (components: a, c, c'', d and e).

The protein localises to the vacuole membrane. Non-catalytic subunit of the peripheral V1 complex of vacuolar ATPase. V-ATPase is responsible for acidifying a variety of intracellular compartments in eukaryotic cells. This Arabidopsis thaliana (Mouse-ear cress) protein is V-type proton ATPase subunit B2 (VHA-B2).